A 66-amino-acid polypeptide reads, in one-letter code: Probable cytochrome b-c1 complex subunit 9 (66 aa).

Residues methionine 1–tryptophan 20 lie on the Mitochondrial matrix side of the membrane. The helical transmembrane segment at methionine 21–valine 46 threads the bilayer. The Mitochondrial intermembrane segment spans residues asparagine 47–glutamine 66.

It belongs to the UQCR10/QCR9 family. In terms of assembly, component of the ubiquinol-cytochrome c oxidoreductase (cytochrome b-c1 complex, complex III, CIII), a multisubunit enzyme composed of 3 respiratory subunits cytochrome b, cytochrome c1 and Rieske protein, 2 core protein subunits, and additional low-molecular weight protein subunits. The complex exists as an obligatory dimer and forms supercomplexes (SCs) in the inner mitochondrial membrane with cytochrome c oxidase (complex IV, CIV).

It localises to the mitochondrion inner membrane. Functionally, component of the ubiquinol-cytochrome c oxidoreductase, a multisubunit transmembrane complex that is part of the mitochondrial electron transport chain which drives oxidative phosphorylation. The respiratory chain contains 3 multisubunit complexes succinate dehydrogenase (complex II, CII), ubiquinol-cytochrome c oxidoreductase (cytochrome b-c1 complex, complex III, CIII) and cytochrome c oxidase (complex IV, CIV), that cooperate to transfer electrons derived from NADH and succinate to molecular oxygen, creating an electrochemical gradient over the inner membrane that drives transmembrane transport and the ATP synthase. The cytochrome b-c1 complex catalyzes electron transfer from ubiquinol to cytochrome c, linking this redox reaction to translocation of protons across the mitochondrial inner membrane, with protons being carried across the membrane as hydrogens on the quinol. In the process called Q cycle, 2 protons are consumed from the matrix, 4 protons are released into the intermembrane space and 2 electrons are passed to cytochrome c. The chain is Probable cytochrome b-c1 complex subunit 9 from Dictyostelium discoideum (Social amoeba).